Here is a 177-residue protein sequence, read N- to C-terminus: Large ribosomal subunit protein uL6 (177 aa).

This sequence belongs to the universal ribosomal protein uL6 family. In terms of assembly, part of the 50S ribosomal subunit.

This protein binds to the 23S rRNA, and is important in its secondary structure. It is located near the subunit interface in the base of the L7/L12 stalk, and near the tRNA binding site of the peptidyltransferase center. In Parvibaculum lavamentivorans (strain DS-1 / DSM 13023 / NCIMB 13966), this protein is Large ribosomal subunit protein uL6.